Here is a 632-residue protein sequence, read N- to C-terminus: 1-deoxy-D-xylulose-5-phosphate synthase (632 aa).

Positions 1–25 (MPTTFHEIPRKRPTTPLLDRANTPD) are disordered. Thiamine diphosphate contacts are provided by residues His87 and 128 to 130 (GHS). Asp159 provides a ligand contact to Mg(2+). Thiamine diphosphate is bound by residues 160–161 (GA), Asn188, Phe295, and Glu378. Residue Asn188 participates in Mg(2+) binding.

Belongs to the transketolase family. DXPS subfamily. In terms of assembly, homodimer. Requires Mg(2+) as cofactor. Thiamine diphosphate serves as cofactor.

The enzyme catalyses D-glyceraldehyde 3-phosphate + pyruvate + H(+) = 1-deoxy-D-xylulose 5-phosphate + CO2. Its pathway is metabolic intermediate biosynthesis; 1-deoxy-D-xylulose 5-phosphate biosynthesis; 1-deoxy-D-xylulose 5-phosphate from D-glyceraldehyde 3-phosphate and pyruvate: step 1/1. Its function is as follows. Catalyzes the acyloin condensation reaction between C atoms 2 and 3 of pyruvate and glyceraldehyde 3-phosphate to yield 1-deoxy-D-xylulose-5-phosphate (DXP). The polypeptide is 1-deoxy-D-xylulose-5-phosphate synthase (Pseudomonas fluorescens (strain Pf0-1)).